The following is a 345-amino-acid chain: MNDLTKKPILQVLAGETVSPPPVWLMRQAGRYLAEYRQVRSRAKNFIDFCFSPDLAAEVTLQPIRRFGFDAAILFADILLVPIALGRKVWFVTGEGPQLEPFDPRQFEELRLDQTEAVLGSIGETLKRVVPELPDTTTMIGFAGSPWTVATYMVEGGGSKDRFRTRVAAWEYPEAFDGMLDRIADVTAEYLIMQARSGAEVLKLFDSWAEGLPEPLFERVVIRPTKRIVDAVRAAGIDVPIIGFPRGAGTLYPRYARETGVTAIAVDTGVDPAWIQSVLPAGMPVQGHLDPSVLRAGGAALDGEVDRLLDQWAGRPHIFNLGHGITPDVPVAHVEQLLARIRDRS.

Substrate contacts are provided by residues 27 to 31, Asp-77, Tyr-152, Ser-207, and His-323; that span reads RQAGR.

The protein belongs to the uroporphyrinogen decarboxylase family. Homodimer.

Its subcellular location is the cytoplasm. The catalysed reaction is uroporphyrinogen III + 4 H(+) = coproporphyrinogen III + 4 CO2. It functions in the pathway porphyrin-containing compound metabolism; protoporphyrin-IX biosynthesis; coproporphyrinogen-III from 5-aminolevulinate: step 4/4. Its function is as follows. Catalyzes the decarboxylation of four acetate groups of uroporphyrinogen-III to yield coproporphyrinogen-III. In Maricaulis maris (strain MCS10) (Caulobacter maris), this protein is Uroporphyrinogen decarboxylase.